Here is a 156-residue protein sequence, read N- to C-terminus: 6,7-dimethyl-8-ribityllumazine synthase (156 aa).

5-amino-6-(D-ribitylamino)uracil is bound by residues Phe23, 57–59 (AFE), and 81–83 (AVI). 86–87 (ST) contacts (2S)-2-hydroxy-3-oxobutyl phosphate. His89 (proton donor) is an active-site residue. Position 114 (Phe114) interacts with 5-amino-6-(D-ribitylamino)uracil. Arg128 is a binding site for (2S)-2-hydroxy-3-oxobutyl phosphate.

This sequence belongs to the DMRL synthase family.

It catalyses the reaction (2S)-2-hydroxy-3-oxobutyl phosphate + 5-amino-6-(D-ribitylamino)uracil = 6,7-dimethyl-8-(1-D-ribityl)lumazine + phosphate + 2 H2O + H(+). Its pathway is cofactor biosynthesis; riboflavin biosynthesis; riboflavin from 2-hydroxy-3-oxobutyl phosphate and 5-amino-6-(D-ribitylamino)uracil: step 1/2. Catalyzes the formation of 6,7-dimethyl-8-ribityllumazine by condensation of 5-amino-6-(D-ribitylamino)uracil with 3,4-dihydroxy-2-butanone 4-phosphate. This is the penultimate step in the biosynthesis of riboflavin. This is 6,7-dimethyl-8-ribityllumazine synthase from Brachyspira hyodysenteriae (strain ATCC 49526 / WA1).